We begin with the raw amino-acid sequence, 280 residues long: Biotin carboxyl carrier protein of acetyl-CoA carboxylase 1, chloroplastic (280 aa).

A chloroplast-targeting transit peptide spans 1–82; sequence MASSSFSVTS…SNAAKVDGPS (82 aa). The span at 52–75 shows a compositional bias: polar residues; sequence PSRSSYPVVKAQSNKVSTGASSNA. Disordered stretches follow at residues 52-106 and 164-215; these read PSRS…ATEE and QPSY…GTFY. The segment covering 177 to 188 has biased composition (low complexity); it reads PAAAAPAPSTPA. The segment covering 189–198 has biased composition (pro residues); that stretch reads SLPPPSPPTP. Residues 203–279 form the Biotinyl-binding domain; the sequence is LPTVKSPMAG…SLDTPLFVVQ (77 aa). At Lys-245 the chain carries N6-biotinyllysine.

As to quaternary structure, acetyl-CoA carboxylase is a heterohexamer composed of biotin carboxyl carrier protein, biotin carboxylase and 2 subunits each of ACCase subunit alpha and ACCase plastid-coded subunit beta (accD). As to expression, present in developing tissues from roots, leaves, flowers, siliques and seeds (at protein level).

The protein localises to the plastid. It localises to the chloroplast. It functions in the pathway lipid metabolism; fatty acid biosynthesis. In terms of biological role, this protein is a component of the acetyl coenzyme A carboxylase complex; first, biotin carboxylase catalyzes the carboxylation of the carrier protein and then the transcarboxylase transfers the carboxyl group to form malonyl-CoA. The sequence is that of Biotin carboxyl carrier protein of acetyl-CoA carboxylase 1, chloroplastic (BCCP1) from Arabidopsis thaliana (Mouse-ear cress).